The primary structure comprises 91 residues: Em-like protein (91 aa).

2 stretches are compositionally biased toward basic and acidic residues: residues 1–18 and 31–51; these read MEQQ…REGE and DAQE…KEQI. The disordered stretch occupies residues 1 to 91; sequence MEQQQDRREL…PIDESKYRHP (91 aa). Gly residues predominate over residues 62–73; the sequence is KGGLSSAGGPGG. The segment covering 75–91 has biased composition (basic and acidic residues); the sequence is RASEEGRPIDESKYRHP.

It belongs to the small hydrophilic plant seed protein family.

The chain is Em-like protein from Picea glauca (White spruce).